A 533-amino-acid polypeptide reads, in one-letter code: GMP synthase [glutamine-hydrolyzing] (533 aa).

Residues 25–215 (SIVIFDFGSQ…VFNICKCHAN (191 aa)) enclose the Glutamine amidotransferase type-1 domain. Cysteine 102 acts as the Nucleophile in catalysis. Catalysis depends on residues histidine 189 and glutamate 191. The 193-residue stretch at 216–408 (WTMGNYIQES…LGLPDEMIWR (193 aa)) folds into the GMPS ATP-PPase domain. 243 to 249 (SGGVDSA) provides a ligand contact to ATP.

As to quaternary structure, homodimer.

It carries out the reaction XMP + L-glutamine + ATP + H2O = GMP + L-glutamate + AMP + diphosphate + 2 H(+). It functions in the pathway purine metabolism; GMP biosynthesis; GMP from XMP (L-Gln route): step 1/1. Functionally, catalyzes the synthesis of GMP from XMP. The polypeptide is GMP synthase [glutamine-hydrolyzing] (Dehalococcoides mccartyi (strain ATCC BAA-2266 / KCTC 15142 / 195) (Dehalococcoides ethenogenes (strain 195))).